The primary structure comprises 212 residues: Uridine kinase (212 aa).

Position 13 to 20 (13 to 20) interacts with ATP; sequence GGSGSGKT.

The protein belongs to the uridine kinase family.

The protein resides in the cytoplasm. The enzyme catalyses uridine + ATP = UMP + ADP + H(+). The catalysed reaction is cytidine + ATP = CMP + ADP + H(+). It participates in pyrimidine metabolism; CTP biosynthesis via salvage pathway; CTP from cytidine: step 1/3. The protein operates within pyrimidine metabolism; UMP biosynthesis via salvage pathway; UMP from uridine: step 1/1. This is Uridine kinase from Bacillus anthracis (strain A0248).